The sequence spans 453 residues: Kynurenine 3-monooxygenase (453 aa).

The protein belongs to the aromatic-ring hydroxylase family. KMO subfamily. FAD serves as cofactor.

It carries out the reaction L-kynurenine + NADPH + O2 + H(+) = 3-hydroxy-L-kynurenine + NADP(+) + H2O. The protein operates within cofactor biosynthesis; NAD(+) biosynthesis; quinolinate from L-kynurenine: step 1/3. In terms of biological role, catalyzes the hydroxylation of L-kynurenine (L-Kyn) to form 3-hydroxy-L-kynurenine (L-3OHKyn). Required for synthesis of quinolinic acid. This Salinispora tropica (strain ATCC BAA-916 / DSM 44818 / JCM 13857 / NBRC 105044 / CNB-440) protein is Kynurenine 3-monooxygenase.